A 790-amino-acid polypeptide reads, in one-letter code: MELSEGELSHTSSSSSFVPVDQRQLQDAIQIIDENKHFNTGILDYINKTSPADVGNNYHIISVFGSQSTGKSTLLNRLFNTNFDVMDESNRQQTTKGIWLAYSPVVSTTLGHTTSKSNILVMDVEGTDGRERGEDQDFERKAALFALSTSEVLIINIWETQVGLYQGANMGLLKTVFEVNLSLFGKSKLETHNDHKVLLLIVIRDHVGVTPVESLAKTFTSDLQNMWSSLAKPAELEHLQFADFFDVTFHALNHKVLQPKEFGEGINRLGDRLVVSNELFKPEYHHDVPIDGWTMYAERCWEQIETNKDLDLPTQQILVAQFKCDEIVESVFQEFLAKYQHHFKEVDAAPDFEELGALFADLRQDAFEDYDASASRYNKAVYEQKRKKLRWLINDKLKEVFDVHAKNLCNTLLEKFEKDLVALKGKDFAVNVKTLSTKLVEDVNFQVSLMSLQGDLSLDEIILALTKDIDAIVAKQQVIELNSIVNKSVKKLSASLSKSIQFELGDPNEETWDNVLQQFKGVYEKFGGDFGLGTSSTQNQQAIEKFKFKSWCQFYDVTHKLISREKLLALLQDRFDDKFRYDENGLPKLYLNEQDLEKTFAVAKQHALQVLPILTFAKLTDGSEIVPDYDIFDSKLREQFLGGYDDSDDEEDHCFAEIITEQEKSEVLAKFKKEVDAKYIETKRSIVQHITQIPYYIYLIILVLGWNEFMAIIRNPLFFSLSIVLGATVYVLYYLGLLRPALVVAQRTMDEVIVMAKTKLREVLIDDHEVTGRQLNKMAGSKENIELDDM.

At 1-692 the chain is on the cytoplasmic side; the sequence is MELSEGELSH…KRSIVQHITQ (692 aa). One can recognise a GB1/RHD3-type G domain in the interval 55 to 284; that stretch reads GNNYHIISVF…VSNELFKPEY (230 aa). 65–72 lines the GTP pocket; sequence GSQSTGKS. Residues 693-713 traverse the membrane as a helical segment; that stretch reads IPYYIYLIILVLGWNEFMAII. At 714–716 the chain is on the lumenal side; that stretch reads RNP. A helical membrane pass occupies residues 717-737; it reads LFFSLSIVLGATVYVLYYLGL. Residues 738-790 are Cytoplasmic-facing; that stretch reads LRPALVVAQRTMDEVIVMAKTKLREVLIDDHEVTGRQLNKMAGSKENIELDDM.

The protein belongs to the TRAFAC class dynamin-like GTPase superfamily. GB1/RHD3 GTPase family. RHD3 subfamily.

The protein localises to the endoplasmic reticulum membrane. Its function is as follows. Cooperates with the reticulon proteins and tubule-shaping DP1 family proteins to generate and maintain the structure of the tubular endoplasmic reticulum network. Has GTPase activity, which is required for its function in ER organization. This Candida albicans (strain WO-1) (Yeast) protein is Protein SEY1.